Reading from the N-terminus, the 228-residue chain is uncharacterized protein (228 aa).

4 consecutive transmembrane segments (helical) span residues 37 to 54 (WCMH…TLIV), 67 to 89 (VVSI…STGV), 104 to 126 (HIGI…TSRL), and 138 to 160 (VLHV…LVLY).

It is found in the cell membrane. This is an uncharacterized protein from Treponema pallidum (strain Nichols).